Consider the following 158-residue polypeptide: Copper transporter 2 (158 aa).

Residues M1 to S20 form a disordered region. The next 2 helical transmembrane spans lie at G53–A73 and Y104–G124.

This sequence belongs to the copper transporter (Ctr) (TC 1.A.56) family. SLC31A subfamily. As to expression, highly expressed in leaves and at lower levels in roots, stems and flowers.

The protein localises to the membrane. In terms of biological role, involved in the transport of copper. This chain is Copper transporter 2 (COPT2), found in Arabidopsis thaliana (Mouse-ear cress).